We begin with the raw amino-acid sequence, 241 residues long: Sugar fermentation stimulation protein homolog (241 aa).

The protein belongs to the SfsA family.

The chain is Sugar fermentation stimulation protein homolog from Trichormus variabilis (strain ATCC 29413 / PCC 7937) (Anabaena variabilis).